The primary structure comprises 534 residues: Probable alpha-galactosidase A (534 aa).

The first 25 residues, 1-25 (MRLITRWIPLANALASTMPVQVVAS), serve as a signal peptide directing secretion. A disulfide bridge connects residues Cys-47 and Cys-79. Residues Asn-50, Asn-88, Asn-94, and Asn-124 are each glycosylated (N-linked (GlcNAc...) asparagine). The cysteines at positions 127 and 157 are disulfide-linked. The active-site Nucleophile is the Asp-155. The N-linked (GlcNAc...) asparagine glycan is linked to Asn-204. Catalysis depends on Asp-213, which acts as the Proton donor. One can recognise a Ricin B-type lectin domain in the interval 413 to 534 (CSQVIPTGLI…GLPAGVHVAL (122 aa)). Cysteines 430 and 443 form a disulfide. Residue Asn-444 is glycosylated (N-linked (GlcNAc...) asparagine). A disulfide bond links Cys-468 and Cys-481.

This sequence belongs to the glycosyl hydrolase 27 family.

It is found in the secreted. It carries out the reaction Hydrolysis of terminal, non-reducing alpha-D-galactose residues in alpha-D-galactosides, including galactose oligosaccharides, galactomannans and galactolipids.. Its function is as follows. Hydrolyzes a variety of simple alpha-D-galactoside as well as more complex molecules such as oligosaccharides and polysaccharides. The chain is Probable alpha-galactosidase A (aglA) from Aspergillus oryzae (strain ATCC 42149 / RIB 40) (Yellow koji mold).